The sequence spans 470 residues: tRNA modification GTPase MnmE (470 aa).

Arginine 24, glutamate 81, and lysine 122 together coordinate (6S)-5-formyl-5,6,7,8-tetrahydrofolate. The TrmE-type G domain maps to 218 to 383 (GIKIVIAGKP…LQEYLSNNIK (166 aa)). Residue asparagine 228 participates in K(+) binding. GTP is bound by residues 228-233 (NAGKSS), 247-253 (STISGTT), and 272-275 (DTAG). Serine 232 serves as a coordination point for Mg(2+). Residues serine 247, isoleucine 249, and threonine 252 each coordinate K(+). Threonine 253 provides a ligand contact to Mg(2+). Lysine 470 is a binding site for (6S)-5-formyl-5,6,7,8-tetrahydrofolate.

It belongs to the TRAFAC class TrmE-Era-EngA-EngB-Septin-like GTPase superfamily. TrmE GTPase family. In terms of assembly, homodimer. Heterotetramer of two MnmE and two MnmG subunits. The cofactor is K(+).

It localises to the cytoplasm. Its function is as follows. Exhibits a very high intrinsic GTPase hydrolysis rate. Involved in the addition of a carboxymethylaminomethyl (cmnm) group at the wobble position (U34) of certain tRNAs, forming tRNA-cmnm(5)s(2)U34. This chain is tRNA modification GTPase MnmE, found in Blochmanniella pennsylvanica (strain BPEN).